A 249-amino-acid polypeptide reads, in one-letter code: DNA polymerase sliding clamp (249 aa).

It belongs to the PCNA family. In terms of assembly, the subunits circularize to form a toroid; DNA passes through its center. Replication factor C (RFC) is required to load the toroid on the DNA. Homotrimer. Interacts with NucS.

Functionally, sliding clamp subunit that acts as a moving platform for DNA processing. Responsible for tethering the catalytic subunit of DNA polymerase and other proteins to DNA during high-speed replication. Regulates activity of NucS endonuclease and prevents non-specific cleavage. This Pyrococcus abyssi (strain GE5 / Orsay) protein is DNA polymerase sliding clamp.